Here is a 189-residue protein sequence, read N- to C-terminus: Thermostable direct hemolysin-related (189 aa).

Residues 1-24 (MKYRYFAKKSFLFISMLAAFKTFA) form the signal peptide. A disulfide bridge connects residues Cys-175 and Cys-185.

The protein belongs to the TDH hemolysin family. Homodimer.

Bacterial hemolysins are exotoxins that attack blood cell membranes and cause cell rupture by mechanisms not clearly defined. The sequence is that of Thermostable direct hemolysin-related (tdh3) from Vibrio parahaemolyticus.